The primary structure comprises 506 residues: Acetylcholine receptor subunit gamma (506 aa).

Positions M1–S17 are cleaved as a signal peptide. Residues E18–K235 are Extracellular-facing. A glycan (N-linked (GlcNAc...) asparagine) is linked at N85. A disulfide bridge connects residues C145 and C159. The next 3 helical transmembrane spans lie at P236–L260, C269–A287, and Y303–V324. Topologically, residues S325 to K466 are cytoplasmic. Residue Y381 is modified to Phosphotyrosine; by Tyr-kinases. The helical transmembrane segment at A467–N490 threads the bilayer.

It belongs to the ligand-gated ion channel (TC 1.A.9) family. Acetylcholine receptor (TC 1.A.9.1) subfamily. Gamma/CHRNG sub-subfamily. As to quaternary structure, pentamer of two alpha chains, and one each of the beta, delta, and gamma chains. In terms of processing, seems not to be glycosylated on Asn-158.

It localises to the postsynaptic cell membrane. The protein resides in the cell membrane. The catalysed reaction is K(+)(in) = K(+)(out). The enzyme catalyses Na(+)(in) = Na(+)(out). Its function is as follows. After binding acetylcholine, the AChR responds by an extensive change in conformation that affects all subunits and leads to opening of an ion-conducting channel across the plasma membrane. The sequence is that of Acetylcholine receptor subunit gamma (CHRNG) from Tetronarce californica (Pacific electric ray).